Reading from the N-terminus, the 186-residue chain is uncharacterized protein (186 aa).

Asn-34 is a glycosylation site (N-linked (GlcNAc...) asparagine; by host). 3 consecutive transmembrane segments (helical) span residues 47 to 67 (IGMV…ATTF), 114 to 134 (ILET…IVLL), and 144 to 164 (LEMI…TLFF).

Its subcellular location is the membrane. This is an uncharacterized protein from Acanthamoeba polyphaga mimivirus (APMV).